Reading from the N-terminus, the 310-residue chain is Glucan endo-1,3-beta-glucosidase GI (310 aa).

Residue Glu-96 is the Proton donor of the active site. Glu-234 serves as the catalytic Nucleophile.

Belongs to the glycosyl hydrolase 17 family. As to quaternary structure, monomer. As to expression, young leaves and roots.

The catalysed reaction is Hydrolysis of (1-&gt;3)-beta-D-glucosidic linkages in (1-&gt;3)-beta-D-glucans.. In terms of biological role, may provide a degree of protection against microbial invasion of germinated barley grain through its ability to degrade fungal cell wall polysaccharides. Does not hydrolyze (1,3;1,4)-beta-D-glucans, (1,6)-beta-D-glucan, CM-cellulose, insoluble (1,3)-beta-D-glucans or aryl beta-D-glycosides. The protein is Glucan endo-1,3-beta-glucosidase GI of Hordeum vulgare (Barley).